Reading from the N-terminus, the 310-residue chain is Collagen-like protein V6 (310 aa).

Residues Met-1–Tyr-41 show a composition bias toward polar residues. The disordered stretch occupies residues Met-1–Gly-183. 2 Collagen-like domains span residues Gly-61–Ala-119 and Gly-123–Pro-182. Positions Ser-92–Ser-101 are enriched in basic and acidic residues. 2 N-linked (GlcNAc...) asparagine; by host glycosylation sites follow: Asn-227 and Asn-264.

It belongs to the sputnik virus V6 family.

In Sputnik virophage, this protein is Collagen-like protein V6.